The primary structure comprises 78 residues: Acyl carrier protein (78 aa).

The region spanning 2-77 (SDTADRVQKI…DATKYIEEHK (76 aa)) is the Carrier domain. S37 bears the O-(pantetheine 4'-phosphoryl)serine mark.

Belongs to the acyl carrier protein (ACP) family. 4'-phosphopantetheine is transferred from CoA to a specific serine of apo-ACP by AcpS. This modification is essential for activity because fatty acids are bound in thioester linkage to the sulfhydryl of the prosthetic group.

It localises to the cytoplasm. It participates in lipid metabolism; fatty acid biosynthesis. In terms of biological role, carrier of the growing fatty acid chain in fatty acid biosynthesis. This Erythrobacter litoralis (strain HTCC2594) protein is Acyl carrier protein.